Here is a 120-residue protein sequence, read N- to C-terminus: Large ribosomal subunit protein bL19 (120 aa).

It belongs to the bacterial ribosomal protein bL19 family.

This protein is located at the 30S-50S ribosomal subunit interface and may play a role in the structure and function of the aminoacyl-tRNA binding site. In Rippkaea orientalis (strain PCC 8801 / RF-1) (Cyanothece sp. (strain PCC 8801)), this protein is Large ribosomal subunit protein bL19.